Consider the following 423-residue polypeptide: Serine hydroxymethyltransferase (423 aa).

Residues leucine 120 and 124–126 each bind (6S)-5,6,7,8-tetrahydrofolate; that span reads GHL. Residue lysine 229 is modified to N6-(pyridoxal phosphate)lysine. 353-355 is a binding site for (6S)-5,6,7,8-tetrahydrofolate; that stretch reads SPF.

The protein belongs to the SHMT family. As to quaternary structure, homodimer. Pyridoxal 5'-phosphate serves as cofactor.

It localises to the cytoplasm. It carries out the reaction (6R)-5,10-methylene-5,6,7,8-tetrahydrofolate + glycine + H2O = (6S)-5,6,7,8-tetrahydrofolate + L-serine. The protein operates within one-carbon metabolism; tetrahydrofolate interconversion. It functions in the pathway amino-acid biosynthesis; glycine biosynthesis; glycine from L-serine: step 1/1. In terms of biological role, catalyzes the reversible interconversion of serine and glycine with tetrahydrofolate (THF) serving as the one-carbon carrier. This reaction serves as the major source of one-carbon groups required for the biosynthesis of purines, thymidylate, methionine, and other important biomolecules. Also exhibits THF-independent aldolase activity toward beta-hydroxyamino acids, producing glycine and aldehydes, via a retro-aldol mechanism. The protein is Serine hydroxymethyltransferase of Prochlorococcus marinus (strain MIT 9515).